We begin with the raw amino-acid sequence, 344 residues long: Methionine import ATP-binding protein MetN (344 aa).

An ABC transporter domain is found at 2–241 (IEIKSVNKVF…PKTELAHQFI (240 aa)). 38–45 (GSSGAGKS) is a binding site for ATP.

Belongs to the ABC transporter superfamily. Methionine importer (TC 3.A.1.24) family. In terms of assembly, the complex is composed of two ATP-binding proteins (MetN), two transmembrane proteins (MetI) and a solute-binding protein (MetQ).

The protein localises to the cell inner membrane. The enzyme catalyses L-methionine(out) + ATP + H2O = L-methionine(in) + ADP + phosphate + H(+). It catalyses the reaction D-methionine(out) + ATP + H2O = D-methionine(in) + ADP + phosphate + H(+). Part of the ABC transporter complex MetNIQ involved in methionine import. Responsible for energy coupling to the transport system. The protein is Methionine import ATP-binding protein MetN of Vibrio cholerae serotype O1 (strain ATCC 39315 / El Tor Inaba N16961).